A 114-amino-acid chain; its full sequence is Beta-microseminoprotein (114 aa).

Residues methionine 1 to alanine 20 form the signal peptide. Disulfide bonds link cysteine 22–cysteine 70, cysteine 38–cysteine 62, cysteine 57–cysteine 93, cysteine 60–cysteine 69, and cysteine 84–cysteine 107.

Belongs to the beta-microseminoprotein family. In terms of assembly, homodimer; Interacts with PI16.

Its subcellular location is the secreted. In Papio anubis (Olive baboon), this protein is Beta-microseminoprotein (MSMB).